A 241-amino-acid polypeptide reads, in one-letter code: PRA1 family protein H (241 aa).

Helical transmembrane passes span 142–162 (LFIVFFACALYQMPLALVGLL), 189–205 (LSIGIGQCATAVLLTFL), and 209–228 (MALFSALAISYSVMILHAGF).

Belongs to the PRA1 family.

The protein localises to the endoplasmic reticulum membrane. Functionally, may be involved in both secretory and endocytic intracellular trafficking in the endosomal/prevacuolar compartments. This chain is PRA1 family protein H (PRA1H), found in Arabidopsis thaliana (Mouse-ear cress).